The following is a 181-amino-acid chain: Shikimate kinase 2 (181 aa).

12-17 (GCGKTT) serves as a coordination point for ATP. Mg(2+) contacts are provided by Thr-16 and Asp-32. Substrate-binding residues include Asp-34, Arg-58, and Gly-79. The segment at 112–126 (EAEPEADLRPTLTGK) is LID domain. Arg-120 is a binding site for ATP. Arg-139 contacts substrate.

This sequence belongs to the shikimate kinase family. AroL subfamily. As to quaternary structure, monomer. Mg(2+) is required as a cofactor.

The protein localises to the cytoplasm. It carries out the reaction shikimate + ATP = 3-phosphoshikimate + ADP + H(+). It participates in metabolic intermediate biosynthesis; chorismate biosynthesis; chorismate from D-erythrose 4-phosphate and phosphoenolpyruvate: step 5/7. Functionally, catalyzes the specific phosphorylation of the 3-hydroxyl group of shikimic acid using ATP as a cosubstrate. The chain is Shikimate kinase 2 from Salmonella enteritidis PT4 (strain P125109).